The sequence spans 365 residues: Centrosomal protein of 41 kDa B (365 aa).

The span at 1-14 (MSAKRSIGDPEILK) shows a compositional bias: basic and acidic residues. Disordered stretches follow at residues 1–23 (MSAKRSIGDPEILKKRIPQNQKY) and 104–123 (EFLTDRPNGKGSPVSESKSP). A Rhodanese domain is found at 177 to 274 (EDCPFLLLDV…ISQKFPQGLT (98 aa)). The disordered stretch occupies residues 329 to 365 (TSTPSRLRLDSRNSKVPSSASSARSLSSTSSHSKPWK). A compositionally biased stretch (low complexity) spans 342-365 (SKVPSSASSARSLSSTSSHSKPWK).

Belongs to the CEP41 family.

It localises to the cytoplasm. The protein localises to the cytoskeleton. It is found in the microtubule organizing center. The protein resides in the centrosome. Its subcellular location is the cell projection. It localises to the cilium. The protein localises to the cilium basal body. Functionally, required during ciliogenesis for tubulin glutamylation in cilium. Probably acts by participating in the transport of tubulin polyglutamylases between the basal body and the cilium. This is Centrosomal protein of 41 kDa B (cep41-b) from Xenopus laevis (African clawed frog).